Here is a 345-residue protein sequence, read N- to C-terminus: MSVIVPIHGPAIAPAPAPERVGVLLVNLGTPDSCDTKGVRIYLREFLSDPRVIENQGLFWKLALNGIILNTRPARKAKDYQKIWNHEKNESPLKTITRAQAEKLSASLGDRGHLIVDWAMRYGNPSLRDRIEALVAKGCTRLLVVPLYPQYSAATSATVCDQAFRVLRELRAQPTLRVTPPYYRDSAYIDALATSIKSHLASLTFEPELIVASFHGMPQAYIDKGDPYQAQCVATVEALRERMGVADDKLLLTFQSRFGFDQWLQPYTDKTIEALARKGVRKLAVVMPGFSADCLETLEEIAQENAEIFMEHGGEEFTAIPCLNDSDAGVQVIRQLVLRELQGWL.

Fe cation-binding residues include His215 and Glu296.

This sequence belongs to the ferrochelatase family.

It localises to the cytoplasm. The enzyme catalyses heme b + 2 H(+) = protoporphyrin IX + Fe(2+). It participates in porphyrin-containing compound metabolism; protoheme biosynthesis; protoheme from protoporphyrin-IX: step 1/1. Its function is as follows. Catalyzes the ferrous insertion into protoporphyrin IX. This is Ferrochelatase from Rhodopseudomonas palustris (strain ATCC BAA-98 / CGA009).